Reading from the N-terminus, the 577-residue chain is Protein downstream neighbor of son homolog (577 aa).

Disordered stretches follow at residues 1 to 67 (MAEL…KRRN) and 328 to 382 (FTQP…LEEM). Residues 362–375 (ETDEVSDESDEDES) are compositionally biased toward acidic residues.

The protein belongs to the DONSON family. Component of the replisome complex.

The protein resides in the nucleus. In terms of biological role, replisome component that maintains genome stability by protecting stalled or damaged replication forks. After the induction of replication stress, required for the stabilization of stalled replication forks, the efficient activation of the intra-S-phase and G/2M cell-cycle checkpoints and the maintenance of genome stability. This is Protein downstream neighbor of son homolog from Xenopus tropicalis (Western clawed frog).